Consider the following 108-residue polypeptide: UPF0251 protein PF0620 (108 aa).

This sequence belongs to the UPF0251 family.

This is UPF0251 protein PF0620 from Pyrococcus furiosus (strain ATCC 43587 / DSM 3638 / JCM 8422 / Vc1).